The primary structure comprises 173 residues: Superoxide dismutase [Cu-Zn] (173 aa).

The first 22 residues, 1 to 22, serve as a signal peptide directing secretion; it reads MNKAKTLLFTALAFGLSHQALA. Residues H67, H69, and H92 each contribute to the Cu cation site. C74 and C169 form a disulfide bridge. Residues H92, H101, H110, and D113 each coordinate Zn(2+). H147 is a Cu cation binding site.

This sequence belongs to the Cu-Zn superoxide dismutase family. In terms of assembly, homodimer. It depends on Cu cation as a cofactor. Requires Zn(2+) as cofactor.

It is found in the periplasm. The enzyme catalyses 2 superoxide + 2 H(+) = H2O2 + O2. Functionally, destroys radicals which are normally produced within the cells and which are toxic to biological systems. This Photobacterium leiognathi protein is Superoxide dismutase [Cu-Zn] (sodC).